The primary structure comprises 203 residues: Urease accessory protein UreG (203 aa).

Gly-10 to Thr-17 is a GTP binding site.

Belongs to the SIMIBI class G3E GTPase family. UreG subfamily. As to quaternary structure, homodimer. UreD, UreF and UreG form a complex that acts as a GTP-hydrolysis-dependent molecular chaperone, activating the urease apoprotein by helping to assemble the nickel containing metallocenter of UreC. The UreE protein probably delivers the nickel.

Its subcellular location is the cytoplasm. Facilitates the functional incorporation of the urease nickel metallocenter. This process requires GTP hydrolysis, probably effectuated by UreG. This is Urease accessory protein UreG from Micrococcus luteus (strain ATCC 4698 / DSM 20030 / JCM 1464 / CCM 169 / CCUG 5858 / IAM 1056 / NBRC 3333 / NCIMB 9278 / NCTC 2665 / VKM Ac-2230) (Micrococcus lysodeikticus).